The primary structure comprises 294 residues: Probable endonuclease 4 (294 aa).

Zn(2+) contacts are provided by His71, His111, Glu148, Asp182, His185, His217, Asp230, His232, and Glu262.

The protein belongs to the AP endonuclease 2 family. Requires Zn(2+) as cofactor.

It catalyses the reaction Endonucleolytic cleavage to 5'-phosphooligonucleotide end-products.. Functionally, endonuclease IV plays a role in DNA repair. It cleaves phosphodiester bonds at apurinic or apyrimidinic (AP) sites, generating a 3'-hydroxyl group and a 5'-terminal sugar phosphate. In Acholeplasma laidlawii (strain PG-8A), this protein is Probable endonuclease 4.